The sequence spans 398 residues: Acetate kinase (398 aa).

Asn10 provides a ligand contact to Mg(2+). An ATP-binding site is contributed by Lys17. Substrate is bound at residue Arg91. The active-site Proton donor/acceptor is the Asp148. ATP-binding positions include 208-212 (HLGNG), 283-285 (DCR), and 331-335 (GIGEN). Glu385 serves as a coordination point for Mg(2+).

The protein belongs to the acetokinase family. Homodimer. Mg(2+) is required as a cofactor. Requires Mn(2+) as cofactor.

The protein resides in the cytoplasm. It catalyses the reaction acetate + ATP = acetyl phosphate + ADP. The protein operates within metabolic intermediate biosynthesis; acetyl-CoA biosynthesis; acetyl-CoA from acetate: step 1/2. In terms of biological role, catalyzes the formation of acetyl phosphate from acetate and ATP. Can also catalyze the reverse reaction. This is Acetate kinase from Shewanella loihica (strain ATCC BAA-1088 / PV-4).